The sequence spans 276 residues: MFVPFLIILREGLEAALIVSLIASYLTRTQRGRWIGVMWIGVLLAAALCLGLGIFINETTGEFPQKEQELFEGIVAVIAVVILTWMVFWMRKVSRNVKVQLEQAVDSALQRGNHHGWALVMMVFFAVAREGLESVFFLLAAFQQDVGIWPPLGAMLGLATAVVLGFLLYWGGIRLNLGAFFKWTSLFILFVAAGLAAGAIRAFHEAGLWNHFQEIAFDMSAVLSTHSLFGTLMEGIFGYQEAPSVSEVAVWFIYLIPALVAFVLPPRAGATASRSM.

Residue Met-1 is a topological domain, periplasmic. A helical membrane pass occupies residues 2–22 (FVPFLIILREGLEAALIVSLI). Over 23-34 (ASYLTRTQRGRW) the chain is Cytoplasmic. A helical transmembrane segment spans residues 35–55 (IGVMWIGVLLAAALCLGLGIF). The Periplasmic portion of the chain corresponds to 56 to 69 (INETTGEFPQKEQE). A helical transmembrane segment spans residues 70 to 90 (LFEGIVAVIAVVILTWMVFWM). Residues 91–118 (RKVSRNVKVQLEQAVDSALQRGNHHGWA) lie on the Cytoplasmic side of the membrane. Residues 119-139 (LVMMVFFAVAREGLESVFFLL) traverse the membrane as a helical segment. The Periplasmic portion of the chain corresponds to 140 to 147 (AAFQQDVG). A helical membrane pass occupies residues 148-168 (IWPPLGAMLGLATAVVLGFLL). The Cytoplasmic portion of the chain corresponds to 169 to 179 (YWGGIRLNLGA). A helical transmembrane segment spans residues 180 to 200 (FFKWTSLFILFVAAGLAAGAI). The Periplasmic segment spans residues 201-244 (RAFHEAGLWNHFQEIAFDMSAVLSTHSLFGTLMEGIFGYQEAPS). A helical transmembrane segment spans residues 245–265 (VSEVAVWFIYLIPALVAFVLP). At 266–276 (PRAGATASRSM) the chain is on the cytoplasmic side.

Belongs to the oxidase-dependent Fe transporter (OFeT) (TC 9.A.10.1) family. As to quaternary structure, part of a ferrous iron transporter composed of EfeU, EfeO and EfeB.

The protein resides in the cell inner membrane. Uptake of Fe(2+) ions across the membrane. The sequence is that of Ferrous iron permease EfeU (efeU) from Escherichia coli O6:H1 (strain CFT073 / ATCC 700928 / UPEC).